Here is a 153-residue protein sequence, read N- to C-terminus: Myoglobin (153 aa).

The Globin domain maps to 1-147 (MATACVKSLE…FSDECLDHLK (147 aa)). A heme b-binding site is contributed by histidine 94.

The protein belongs to the globin family. Homodimer; disulfide-linked. Post-translationally, the N-terminus is blocked. In terms of tissue distribution, body wall globin is localized in cellular compartments belonging to the hypodermis, the dorsal, ventral and lateral cords, the nerve ring, and body wall muscle.

Its subcellular location is the cytoplasm. Its function is as follows. High oxygen affinity. Probably supplies oxygen needed for muscle activity. This Ascaris suum (Pig roundworm) protein is Myoglobin.